Reading from the N-terminus, the 313-residue chain is Adhesin MafA 2 (313 aa).

A signal peptide spans 1–14 (MKTLLLLIPLVLTA). The N-palmitoyl cysteine moiety is linked to residue C15. C15 carries the S-diacylglycerol cysteine lipid modification. Residues 282 to 297 (GDTTAQNRPDFKQNNG) are compositionally biased toward polar residues. The disordered stretch occupies residues 282-313 (GDTTAQNRPDFKQNNGKKPDVGNEVIRRRKGG).

Belongs to the MafA family.

The protein localises to the cell outer membrane. The sequence is that of Adhesin MafA 2 (mafA2) from Neisseria meningitidis serogroup C / serotype 2a (strain ATCC 700532 / DSM 15464 / FAM18).